Consider the following 147-residue polypeptide: Probable inactive ribonuclease-like protein 12 (147 aa).

The signal sequence occupies residues 1-20 (MIIMVIIFLVLLFWENEVND).

The protein belongs to the pancreatic ribonuclease family.

The protein localises to the secreted. Functionally, does not exhibit any ribonuclease activity. This Homo sapiens (Human) protein is Probable inactive ribonuclease-like protein 12 (RNASE12).